The primary structure comprises 883 residues: Glutamate receptor 2 (883 aa).

Residues 1–24 (MQKIMHISVLLSPVLWGLIFGVSS) form the signal peptide. Topologically, residues 25-543 (NSIQIGGLFP…GVFSFLDPLA (519 aa)) are extracellular. A disulfide bridge connects residues Cys-78 and Cys-330. Residues Asn-256, Asn-370, Asn-406, and Asn-413 are each glycosylated (N-linked (GlcNAc...) asparagine). Residues Pro-499, Thr-501, and Arg-506 each coordinate L-glutamate. The helical transmembrane segment at 544 to 564 (YEIWMCIVFAYIGVSVVLFLV) threads the bilayer. Over 565-591 (SRFSPYEWHTEEFEDGRETQSSESTNE) the chain is Cytoplasmic. The segment at residues 592-607 (FGIFNSLWFSLGAFMQ) is an intramembrane region (helical; Pore-forming). The stretch at 608 to 610 (QGC) is an intramembrane region. Cys-610 carries S-palmitoyl cysteine lipidation. The Cytoplasmic portion of the chain corresponds to 611–616 (DISPRS). The chain crosses the membrane as a helical span at residues 617–637 (LSGRIVGGVWWFFTLIIISSY). Residues 638–812 (TANLAAFLTV…EKTSALSLSN (175 aa)) are Extracellular-facing. Ser-675 and Thr-676 together coordinate L-glutamate. Ser-683 bears the Phosphoserine; by PKC mark. Ser-717 is subject to Phosphoserine; by PKG. Glu-726 provides a ligand contact to L-glutamate. Cys-739 and Cys-794 are joined by a disulfide. Residues 813-833 (VAGVFYILVGGLGLAMLVALI) form a helical membrane-spanning segment. At 834 to 883 (EFCYKSRAEAKRMKVAKNAQNINPSSSQNSQNFATYKEGYNVYGIESVKI) the chain is on the cytoplasmic side. Residue Cys-836 is the site of S-palmitoyl cysteine attachment. Ser-860 and Ser-863 each carry phosphoserine. The interval 867-877 (ATYKEGYNVYG) is required for interaction with IQSEC1. A Phosphotyrosine modification is found at Tyr-876. Ser-880 bears the Phosphoserine mark.

It belongs to the glutamate-gated ion channel (TC 1.A.10.1) family. GRIA2 subfamily. In terms of assembly, homotetramer or heterotetramer of pore-forming glutamate receptor subunits. Tetramers may be formed by the dimerization of dimers. May interact with MPP4. Forms a ternary complex with GRIP1 and CSPG4. Interacts with ATAD1 in an ATP-dependent manner. ATAD1-catalyzed ATP hydrolysis disrupts binding to ATAD1 and to GRIP1 and leads to AMPAR complex disassembly. Interacts with GRIP1 and GRIP2. Interacts with NSF via its C-terminus. Isoform 1, but not isoform 3, interacts with PICK1. Interacts with CACNG2. Interacts with GRIA1 and SYNDIG1. Part of a complex containing GRIA2, NSF and NAPA and/or NAPB. Interacts with SNX27 (via PDZ domain); the interaction is required for recycling to the plasma membrane when endocytosed and prevent degradation in lysosomes. Interacts with LRFN1. Found in a complex with GRIA1, GRIA3, GRIA4, CNIH2, CNIH3, CACNG2, CACNG3, CACNG4, CACNG5, CACNG7 and CACNG8. Interacts with CACNG5. Interacts with OLFM2. Interacts with AP4B1, AP4E1 and AP4M1; probably indirect it mediates the somatodendritic localization of GRIA2 in neurons. Forms a complex with GRIP1, NSG1 and STX12; controls the intracellular fate of AMPAR and the endosomal sorting of the GRIA2 subunit toward recycling and membrane targeting. Interacts with IQSEC1; the interaction is required for ARF6 activation. Interacts (heterotetramer form) with CNIH2 and CNIH3; this interaction promotes expression at the plasma membrane and extensively modulates their gating properties by slowing deactivation and desensitization kinetics. In terms of processing, palmitoylated. Depalmitoylated upon L-glutamate stimulation. ZDHHC3/GODZ specifically palmitoylates Cys-610, which leads to Golgi retention and decreased cell surface expression. In contrast, Cys-836 palmitoylation does not affect cell surface expression but regulates stimulation-dependent endocytosis. Post-translationally, N-glycosylated. Ubiquitinated by RNF167, leading to its degradation. In terms of processing, phosphorylation at Tyr-876 is required for interaction with IQSEC1 and ARF6 activation, which in turn triggers AMPAR internalization for persistent synaptic depression. Detected in brain cortex, hippocampus and cerebellum (at protein level). Detected in hippocampus.

Its subcellular location is the cell membrane. The protein localises to the postsynaptic cell membrane. The protein resides in the postsynaptic density membrane. It carries out the reaction Ca(2+)(in) = Ca(2+)(out). The catalysed reaction is Na(+)(in) = Na(+)(out). In terms of biological role, ionotropic glutamate receptor that functions as a ligand-gated cation channel, gated by L-glutamate and glutamatergic agonists such as alpha-amino-3-hydroxy-5-methyl-4-isoxazolepropionic acid (AMPA), quisqualic acid, and kainic acid. L-glutamate acts as an excitatory neurotransmitter at many synapses in the central nervous system and plays an important role in fast excitatory synaptic transmission. Binding of the excitatory neurotransmitter L-glutamate induces a conformation change, leading to the opening of the cation channel, and thereby converts the chemical signal to an electrical impulse upon entry of monovalent and divalent cations such as sodium and calcium. The receptor then desensitizes rapidly and enters in a transient inactive state, characterized by the presence of bound agonist. In the presence of CACNG4 or CACNG7 or CACNG8, shows resensitization which is characterized by a delayed accumulation of current flux upon continued application of L-glutamate. Through complex formation with NSG1, GRIP1 and STX12 controls the intracellular fate of AMPAR and the endosomal sorting of the GRIA2 subunit toward recycling and membrane targeting. The chain is Glutamate receptor 2 from Mus musculus (Mouse).